An 884-amino-acid polypeptide reads, in one-letter code: Alanine--tRNA ligase (884 aa).

The Zn(2+) site is built by His565, His569, Cys675, and His679.

The protein belongs to the class-II aminoacyl-tRNA synthetase family. It depends on Zn(2+) as a cofactor.

Its subcellular location is the cytoplasm. It carries out the reaction tRNA(Ala) + L-alanine + ATP = L-alanyl-tRNA(Ala) + AMP + diphosphate. In terms of biological role, catalyzes the attachment of alanine to tRNA(Ala) in a two-step reaction: alanine is first activated by ATP to form Ala-AMP and then transferred to the acceptor end of tRNA(Ala). Also edits incorrectly charged Ser-tRNA(Ala) and Gly-tRNA(Ala) via its editing domain. The chain is Alanine--tRNA ligase from Maricaulis maris (strain MCS10) (Caulobacter maris).